Reading from the N-terminus, the 761-residue chain is Polyribonucleotide nucleotidyltransferase (761 aa).

Residues aspartate 532 and aspartate 538 each coordinate Mg(2+). In terms of domain architecture, KH spans 598 to 657 (PRVISVQIPVDKIGELIGPKGKTINAIQDETGADISIDEDGTVYIGAVDGPSAEAARAQV). In terms of domain architecture, S1 motif spans 669–741 (GEQFLGTVVK…DRGKLSLAPV (73 aa)).

It belongs to the polyribonucleotide nucleotidyltransferase family. Mg(2+) is required as a cofactor.

Its subcellular location is the cytoplasm. The enzyme catalyses RNA(n+1) + phosphate = RNA(n) + a ribonucleoside 5'-diphosphate. Its function is as follows. Involved in mRNA degradation. Catalyzes the phosphorolysis of single-stranded polyribonucleotides processively in the 3'- to 5'-direction. The chain is Polyribonucleotide nucleotidyltransferase from Leifsonia xyli subsp. xyli (strain CTCB07).